The following is a 304-amino-acid chain: 1D-myo-inositol 2-acetamido-2-deoxy-alpha-D-glucopyranoside deacetylase 2 (304 aa).

The Zn(2+) site is built by histidine 17, aspartate 20, and histidine 152.

The protein belongs to the MshB deacetylase family. Requires Zn(2+) as cofactor.

The catalysed reaction is 1D-myo-inositol 2-acetamido-2-deoxy-alpha-D-glucopyranoside + H2O = 1D-myo-inositol 2-amino-2-deoxy-alpha-D-glucopyranoside + acetate. In terms of biological role, catalyzes the deacetylation of 1D-myo-inositol 2-acetamido-2-deoxy-alpha-D-glucopyranoside (GlcNAc-Ins) in the mycothiol biosynthesis pathway. This is 1D-myo-inositol 2-acetamido-2-deoxy-alpha-D-glucopyranoside deacetylase 2 from Catenulispora acidiphila (strain DSM 44928 / JCM 14897 / NBRC 102108 / NRRL B-24433 / ID139908).